Here is a 101-residue protein sequence, read N- to C-terminus: Urease subunit gamma (101 aa).

It belongs to the urease gamma subunit family. Heterotrimer of UreA (gamma), UreB (beta) and UreC (alpha) subunits. Three heterotrimers associate to form the active enzyme.

It localises to the cytoplasm. The catalysed reaction is urea + 2 H2O + H(+) = hydrogencarbonate + 2 NH4(+). It functions in the pathway nitrogen metabolism; urea degradation; CO(2) and NH(3) from urea (urease route): step 1/1. This Ureaplasma urealyticum serovar 10 (strain ATCC 33699 / Western) protein is Urease subunit gamma.